Consider the following 64-residue polypeptide: Large ribosomal subunit protein bL28 (64 aa).

The segment at 1 to 21 is disordered; sequence MAKKDQLTLRGPLYGNNRSHS.

The protein belongs to the bacterial ribosomal protein bL28 family.

The chain is Large ribosomal subunit protein bL28 from Mycoplasma genitalium (strain ATCC 33530 / DSM 19775 / NCTC 10195 / G37) (Mycoplasmoides genitalium).